Reading from the N-terminus, the 1601-residue chain is Ectopic P granules protein 5 (1601 aa).

The disordered stretch occupies residues 1-109 (MAELVRPKKP…EAPPIPARNL (109 aa)). The span at 15–26 (RPQSDDAPRIPD) shows a compositional bias: basic and acidic residues.

Belongs to the EPG5 family.

The protein resides in the cytoplasm. Involved in autophagy. Has a role in the degradation of protein aggregates within autophagosomes. Essential for starvation-induced autotrophy and omegasome development. This chain is Ectopic P granules protein 5 (epg-5), found in Caenorhabditis briggsae.